The chain runs to 211 residues: MGQKVNPVGFRLWTHGSHGSVWYSKSCDYAKTVAEDYFVTKYVESSFAHIGISKVIIKRKGASCDITLHCMKPGLIIGKKGADLESFRLKLNKKFGFVPSLNVVEVKKPNSSAVLVAKSIAFQLEKRSSFRRVIKKAIATVMRESDVKGVKVACSGRLSGAEIARTEVFKEGSIPLHTMRADIDYWVAEAHTTYGVIGVKVWIYRGNIFRV.

A KH type-2 domain is found at 39-107 (VTKYVESSFA…VPSLNVVEVK (69 aa)).

This sequence belongs to the universal ribosomal protein uS3 family. In terms of assembly, part of the 30S ribosomal subunit. Forms a tight complex with proteins S10 and S14.

Binds the lower part of the 30S subunit head. Binds mRNA in the 70S ribosome, positioning it for translation. The sequence is that of Small ribosomal subunit protein uS3 from Neorickettsia sennetsu (strain ATCC VR-367 / Miyayama) (Ehrlichia sennetsu).